A 531-amino-acid polypeptide reads, in one-letter code: Peptide chain release factor 3 (531 aa).

Positions 10–278 (RRRRTFAIIS…SLIDWAPAPK (269 aa)) constitute a tr-type G domain. Residues 19-26 (SHPDAGKT), 87-91 (DTPGH), and 141-144 (NKYD) contribute to the GTP site.

It belongs to the TRAFAC class translation factor GTPase superfamily. Classic translation factor GTPase family. PrfC subfamily.

It is found in the cytoplasm. Functionally, increases the formation of ribosomal termination complexes and stimulates activities of RF-1 and RF-2. It binds guanine nucleotides and has strong preference for UGA stop codons. It may interact directly with the ribosome. The stimulation of RF-1 and RF-2 is significantly reduced by GTP and GDP, but not by GMP. The chain is Peptide chain release factor 3 from Neisseria meningitidis serogroup C / serotype 2a (strain ATCC 700532 / DSM 15464 / FAM18).